The sequence spans 338 residues: Anthranilate phosphoribosyltransferase (338 aa).

5-phospho-alpha-D-ribose 1-diphosphate-binding positions include Gly-81, 84 to 85, Ser-89, 91 to 94, 109 to 117, and Ala-121; these read GD, NVST, and KHGNRALSS. Gly-81 contributes to the anthranilate binding site. Ser-93 contributes to the Mg(2+) binding site. Asn-112 is a binding site for anthranilate. Arg-167 lines the anthranilate pocket. 2 residues coordinate Mg(2+): Asp-226 and Glu-227.

This sequence belongs to the anthranilate phosphoribosyltransferase family. In terms of assembly, homodimer. Mg(2+) is required as a cofactor.

It carries out the reaction N-(5-phospho-beta-D-ribosyl)anthranilate + diphosphate = 5-phospho-alpha-D-ribose 1-diphosphate + anthranilate. The protein operates within amino-acid biosynthesis; L-tryptophan biosynthesis; L-tryptophan from chorismate: step 2/5. Functionally, catalyzes the transfer of the phosphoribosyl group of 5-phosphorylribose-1-pyrophosphate (PRPP) to anthranilate to yield N-(5'-phosphoribosyl)-anthranilate (PRA). The polypeptide is Anthranilate phosphoribosyltransferase (Rhodopseudomonas palustris (strain BisB5)).